Reading from the N-terminus, the 236-residue chain is Ribose-5-phosphate isomerase A (236 aa).

Substrate-binding positions include 28–31 (TGST), 83–86 (DGAD), and 96–99 (KGGG). E105 functions as the Proton acceptor in the catalytic mechanism. K123 lines the substrate pocket.

Belongs to the ribose 5-phosphate isomerase family. As to quaternary structure, homodimer.

It catalyses the reaction aldehydo-D-ribose 5-phosphate = D-ribulose 5-phosphate. The protein operates within carbohydrate degradation; pentose phosphate pathway; D-ribose 5-phosphate from D-ribulose 5-phosphate (non-oxidative stage): step 1/1. In terms of biological role, catalyzes the reversible conversion of ribose-5-phosphate to ribulose 5-phosphate. This is Ribose-5-phosphate isomerase A from Methylorubrum populi (strain ATCC BAA-705 / NCIMB 13946 / BJ001) (Methylobacterium populi).